The following is a 201-amino-acid chain: Large ribosomal subunit protein uL4 (201 aa).

Residues A45–S72 form a disordered region.

Belongs to the universal ribosomal protein uL4 family. As to quaternary structure, part of the 50S ribosomal subunit.

Its function is as follows. One of the primary rRNA binding proteins, this protein initially binds near the 5'-end of the 23S rRNA. It is important during the early stages of 50S assembly. It makes multiple contacts with different domains of the 23S rRNA in the assembled 50S subunit and ribosome. In terms of biological role, forms part of the polypeptide exit tunnel. In Shewanella frigidimarina (strain NCIMB 400), this protein is Large ribosomal subunit protein uL4.